The chain runs to 148 residues: Lysozyme C (148 aa).

Residues 1 to 18 form the signal peptide; that stretch reads MKALIVLGLVLLSVMVQG. A C-type lysozyme domain is found at 19–148; sequence KVFERCELAR…VRQYVQGCGV (130 aa). 4 disulfide bridges follow: Cys-24–Cys-146, Cys-48–Cys-134, Cys-83–Cys-99, and Cys-95–Cys-113. Catalysis depends on residues Glu-53 and Asp-71.

This sequence belongs to the glycosyl hydrolase 22 family. Monomer.

It carries out the reaction Hydrolysis of (1-&gt;4)-beta-linkages between N-acetylmuramic acid and N-acetyl-D-glucosamine residues in a peptidoglycan and between N-acetyl-D-glucosamine residues in chitodextrins.. Lysozymes have primarily a bacteriolytic function; those in tissues and body fluids are associated with the monocyte-macrophage system and enhance the activity of immunoagents. The protein is Lysozyme C (LYZ) of Gorilla gorilla gorilla (Western lowland gorilla).